The following is a 208-amino-acid chain: ER membrane protein complex subunit 8/9 homolog (208 aa).

The 136-residue stretch at 11–146 (YEISQNAYIK…ERSPVMQLCV (136 aa)) folds into the MPN domain.

This sequence belongs to the EMC8/EMC9 family.

This Arabidopsis thaliana (Mouse-ear cress) protein is ER membrane protein complex subunit 8/9 homolog (EMB2731).